The following is a 419-amino-acid chain: Keratin, type II cytoskeletal I (419 aa).

Residues 1–16 form a linker 1 region; it reads KGSTKRANLDPLFEKY. In terms of domain architecture, IF rod spans 1 to 275; that stretch reads KGSTKRANLD…YMLEGEEGRM (275 aa). Residues 17–108 are coil 1B; the sequence is ISDLKRYLDN…TLFAAELSQV (92 aa). The tract at residues 109 to 132 is linker 12; sequence HDQVTDTSVVLTMDNNRDLNLDSI. Positions 133 to 271 are coil 2; it reads IKEVKCQYEQ…STYRYMLEGE (139 aa). The tract at residues 272–419 is tail; sequence EGRMSGQISN…STTSTTKRSY (148 aa).

It belongs to the intermediate filament family. Heterotetramer of two type I and two type II keratins.

The chain is Keratin, type II cytoskeletal I from Xenopus laevis (African clawed frog).